The chain runs to 429 residues: Gamma-glutamyl phosphate reductase (429 aa).

This sequence belongs to the gamma-glutamyl phosphate reductase family.

The protein resides in the cytoplasm. It catalyses the reaction L-glutamate 5-semialdehyde + phosphate + NADP(+) = L-glutamyl 5-phosphate + NADPH + H(+). It participates in amino-acid biosynthesis; L-proline biosynthesis; L-glutamate 5-semialdehyde from L-glutamate: step 2/2. In terms of biological role, catalyzes the NADPH-dependent reduction of L-glutamate 5-phosphate into L-glutamate 5-semialdehyde and phosphate. The product spontaneously undergoes cyclization to form 1-pyrroline-5-carboxylate. In Methylocella silvestris (strain DSM 15510 / CIP 108128 / LMG 27833 / NCIMB 13906 / BL2), this protein is Gamma-glutamyl phosphate reductase.